The chain runs to 134 residues: Profilin-3 (134 aa).

Cysteine 13 and cysteine 118 are joined by a disulfide. An Involved in PIP2 interaction motif is present at residues 84–100 (AVIRGKKGSGGITIKKT). Threonine 114 carries the phosphothreonine modification.

Belongs to the profilin family. Occurs in many kinds of cells as a complex with monomeric actin in a 1:1 ratio. Phosphorylated by MAP kinases.

Its subcellular location is the cytoplasm. It localises to the cytoskeleton. Its function is as follows. Binds to actin and affects the structure of the cytoskeleton. At high concentrations, profilin prevents the polymerization of actin, whereas it enhances it at low concentrations. The chain is Profilin-3 from Olea europaea (Common olive).